Here is a 240-residue protein sequence, read N- to C-terminus: Adenylate dimethylallyltransferase (240 aa).

The protein belongs to the isopentenyl transferase family.

It catalyses the reaction dimethylallyl diphosphate + AMP = N(6)-(dimethylallyl)adenosine 5'-phosphate + diphosphate. In terms of biological role, transfers dimethylallyl groups to AMP as part of the biosynthesis of cytokinin phytohormones. The chain is Adenylate dimethylallyltransferase (izt) from Agrobacterium tumefaciens (strain Ach5).